We begin with the raw amino-acid sequence, 350 residues long: Histidinol-phosphate aminotransferase 1 (350 aa).

An N6-(pyridoxal phosphate)lysine modification is found at K209.

It belongs to the class-II pyridoxal-phosphate-dependent aminotransferase family. Histidinol-phosphate aminotransferase subfamily. In terms of assembly, homodimer. Pyridoxal 5'-phosphate is required as a cofactor.

It catalyses the reaction L-histidinol phosphate + 2-oxoglutarate = 3-(imidazol-4-yl)-2-oxopropyl phosphate + L-glutamate. The protein operates within amino-acid biosynthesis; L-histidine biosynthesis; L-histidine from 5-phospho-alpha-D-ribose 1-diphosphate: step 7/9. The sequence is that of Histidinol-phosphate aminotransferase 1 (hisC1) from Bradyrhizobium diazoefficiens (strain JCM 10833 / BCRC 13528 / IAM 13628 / NBRC 14792 / USDA 110).